A 129-amino-acid polypeptide reads, in one-letter code: Glycine cleavage system H protein (129 aa).

Residues 24 to 106 form the Lipoyl-binding domain; the sequence is TYTVGITEHA…YAGGWIFKIK (83 aa). Lys-65 is modified (N6-lipoyllysine).

The protein belongs to the GcvH family. In terms of assembly, the glycine cleavage system is composed of four proteins: P, T, L and H. The cofactor is (R)-lipoate.

Functionally, the glycine cleavage system catalyzes the degradation of glycine. The H protein shuttles the methylamine group of glycine from the P protein to the T protein. In Shigella dysenteriae serotype 1 (strain Sd197), this protein is Glycine cleavage system H protein.